Reading from the N-terminus, the 341-residue chain is Protein pelota homolog (341 aa).

This sequence belongs to the eukaryotic release factor 1 family. Pelota subfamily. In terms of assembly, monomer. Requires a divalent metal cation as cofactor.

The protein resides in the cytoplasm. Functionally, may function in recognizing stalled ribosomes, interact with stem-loop structures in stalled mRNA molecules, and effect endonucleolytic cleavage of the mRNA. May play a role in the release non-functional ribosomes and degradation of damaged mRNAs. Has endoribonuclease activity. The sequence is that of Protein pelota homolog from Methanoregula boonei (strain DSM 21154 / JCM 14090 / 6A8).